The chain runs to 351 residues: Cytosolic sulfotransferase 11 (351 aa).

98 to 103 (KGGTTW) is a 3'-phosphoadenylyl sulfate binding site. The Proton acceptor role is filled by His163. 3'-phosphoadenylyl sulfate contacts are provided by residues Arg184, Ser192, Tyr250, and 316–318 (RKG).

The protein belongs to the sulfotransferase 1 family.

The protein localises to the cytoplasm. Functionally, sulfotransferase that utilizes 3'-phospho-5'-adenylyl sulfate (PAPS) as sulfonate donor. In Arabidopsis thaliana (Mouse-ear cress), this protein is Cytosolic sulfotransferase 11 (SOT11).